The sequence spans 152 residues: ADP-ribose glycohydrolase OARD1 (152 aa).

The residue at position 2 (alanine 2) is an N-acetylalanine. Positions 2–152 (ASSLNEDPEG…TDIKITVYTL (151 aa)) constitute a Macro domain. The residue at position 4 (serine 4) is a Phosphoserine. Residue leucine 21 coordinates substrate. Lysine 84 acts as the Nucleophile in catalysis. Residues 119 to 125 (RIGCGLD) and leucine 152 each bind substrate. The active-site Proton acceptor is the aspartate 125.

Ubiquitous.

It localises to the nucleus. The protein resides in the nucleoplasm. Its subcellular location is the nucleolus. The protein localises to the chromosome. It catalyses the reaction 2''-O-acetyl-ADP-D-ribose + H2O = ADP-D-ribose + acetate + H(+). It carries out the reaction 5-O-(ADP-D-ribosyl)-L-glutamyl-[protein] + H2O = L-glutamyl-[protein] + ADP-D-ribose + H(+). The catalysed reaction is alpha-NAD(+) + H2O = ADP-D-ribose + nicotinamide + H(+). With respect to regulation, subject to competitive inhibition by the product ADP-ribose. ADP-ribose glycohydrolase that hydrolyzes ADP-ribose and acts on different substrates, such as proteins ADP-ribosylated on glutamate and O-acetyl-ADP-D-ribose. Specifically acts as a glutamate mono-ADP-ribosylhydrolase by mediating the removal of mono-ADP-ribose attached to glutamate residues on proteins. Does not act on poly-ADP-ribosylated proteins: the poly-ADP-ribose chain of poly-ADP-ribosylated glutamate residues must by hydrolyzed into mono-ADP-ribosylated glutamate by PARG to become a substrate for OARD1. Deacetylates O-acetyl-ADP ribose, a signaling molecule generated by the deacetylation of acetylated lysine residues in histones and other proteins. Catalyzes the deacylation of O-acetyl-ADP-ribose, O-propionyl-ADP-ribose and O-butyryl-ADP-ribose, yielding ADP-ribose plus acetate, propionate and butyrate, respectively. In Homo sapiens (Human), this protein is ADP-ribose glycohydrolase OARD1.